Consider the following 425-residue polypeptide: MHPASESSHITRLAESIVANTAIVNAYLCEQNLPLPRFDDINAAVRPCTADDASAESARRAVVTASQELRDLLSGPSAPLMVDWTAHSCLRTIVHFRLAEAVSLVPANDIGTSFANIAAQTSLSETHVTRILRHAMTRHIFREPAPGFVAHTAASALLSRDSVTRDVVGLITDEMWPAGLKVPEALARWPNSQEPEETGFSMANAQGSEEQKKSMWSVYEEDAERARRFGVCMSVENSAMPFPLEELEWQGLVVDIGGGVGFNVFNLAEKHQNARFIVEDLSKTVQQGRLLLPKQLKDRVDFVEHDFFSPQPVKDADIYFFRRIFHDWSDKHAVEIIRSLIPALKPGARVRVNELLVPKPGELPREIEKMARNSDFAMLALLNGKERNNEEWQALFRAASDKFRFGFCKTTPPGLMAVIEFVWEP.

Residues 257 to 258 (GG), D280, 306 to 307 (DF), R322, and R323 each bind S-adenosyl-L-methionine. H326 functions as the Proton acceptor in the catalytic mechanism.

Belongs to the class I-like SAM-binding methyltransferase superfamily. Cation-independent O-methyltransferase family.

The protein operates within mycotoxin biosynthesis. Its function is as follows. O-methyltransferase; part of the gene clusters that mediate the biosynthesis of AM-toxins, host-selective toxins (HSTs) causing Alternaria blotch on apple, a worldwide distributed disease. AM-toxins are cyclic depsipeptides containing the 3 residues 2-hydroxy-isovaleric acid (2-HIV), dehydroalanine, L-alanine which are common for all 3 AM-toxins I to III. The fourth precursor is L-alpha-amino-methoxyphenyl-valeric acid (L-Amv) for AM-toxin I, L-alpha-amino-phenyl-valeric acid (L-Apv) for AM-toxin II, and L-alpha-amino-hydroxyphenyl-valeric acid (L-Ahv) for AM-toxin III. AM-toxins have two target sites for affecting susceptible apple cells; they cause invagination of the plasma membrane and electrolyte loss and chloroplast disorganization. The non-ribosomal peptide synthetase AMT1 contains 4 catalytic modules and is responsible for activation of each residue in AM-toxin. The aldo-keto reductase AMT2 catalyzes the conversion of 2-keto-isovaleric acid (2-KIV) to 2-hydroxy-isovaleric acid (2-HIV), one of the precursor residues incorporated by AMT1 during AM-toxin biosynthesis, by reduction of its ketone to an alcohol. The cytochrome P450 monooxygenase AMT3 and the thioesterase AMT4 are also important for AM-toxin production, but their exact function within the AM-toxin biosynthesis are not known yet. Up to 21 proteins (including AMT1 to AMT4) are predicted to be involved in AM-toxin biosynthesis since their expression ishighly up-regulated in AM-toxin-producing cultures. The sequence is that of O-methyltransferase AMT9 from Alternaria alternata (Alternaria rot fungus).